An 806-amino-acid polypeptide reads, in one-letter code: ATP-dependent zinc metalloprotease FTSH 9, chloroplastic (806 aa).

The N-terminal 62 residues, 1–62 (MTSIELLSPL…SSIQLPQSVP (62 aa)), are a transit peptide targeting the chloroplast. The tract at residues 84-116 (SSRTIVNCQEGDQKASSSEGEGKTNKDKGRKQG) is disordered. The next 2 helical transmembrane spans lie at 133–153 (IIQAQEIGVMLLQLGIVMFVV) and 271–291 (GGFFNSGLIVLFYIAVLAGLL). Residue 369-376 (GLPGTGKT) participates in ATP binding. His594 provides a ligand contact to Zn(2+). Residue Glu595 is part of the active site. Zn(2+) contacts are provided by His598 and Asp677.

In the N-terminal section; belongs to the AAA ATPase family. This sequence in the C-terminal section; belongs to the peptidase M41 family. Zn(2+) is required as a cofactor.

The protein localises to the plastid. The protein resides in the chloroplast thylakoid membrane. Its function is as follows. Probable ATP-dependent zinc metallopeptidase. This is ATP-dependent zinc metalloprotease FTSH 9, chloroplastic (FTSH9) from Arabidopsis thaliana (Mouse-ear cress).